A 606-amino-acid chain; its full sequence is Armadillo repeat-containing X-linked protein 5 (606 aa).

The disordered stretch occupies residues 1–85 (MIGSKTKRKA…KVKKKKDKTN (85 aa)). Residues 15-26 (GASSKPGTNSPA) are compositionally biased toward polar residues. Over residues 40–59 (VKAEPKEEWGNQAEARDEAV) the composition is skewed to basic and acidic residues. 4 ARM repeats span residues 349–388 (CKSRTFSLEPVDFDKLVALLKLTRDPFIHEIATMIMGISP), 470–509 (VKFDYHHVVIYYVRYFISLLNKGSVKIKFQILRVLLCLSK), 511–551 (QANT…NINF), and 568–606 (SELISIFREAKEFDQKLQDLTDHSDPDVRDKVIRLILKL).

It belongs to the eutherian X-chromosome-specific Armcx family. Highly expressed in the developing neural tissues, neural crest derivatives and hind limbs.

This chain is Armadillo repeat-containing X-linked protein 5 (Armcx5), found in Mus musculus (Mouse).